Consider the following 404-residue polypeptide: MEEQHQEAGNESKPSSTSVDLQGDSPLQVEISDAVSERDKVKFTVQTKSGLPHFAQSEFSVVRQHEEFIWLHDTYVENEEYAGLIIPPAPPRPDFEASREKLQKLGEGNSSITREEFSKMKQELEAEYLAIFKKTVAMHEVFLQRLAAHPTLRRDHNFSVFLEYSQDLSVREKNRKEVLGGLLRSIVRSADEVLITGISGLKEVDDFFEHERTFLVEYHTRIRDTCQRADRVMHSHKCLADNYIPISAALSSLGTQEVNQLKRSFLKLAELFERLRKLEGRVASDEDLKLSDMLRYYMRDSQAAKDLLYRRLRALADYENANKALDKARTRNREVRPAESRQQLCCQRFERLSDSAKQELMDFKSRRVSSFRKNLIELAELELKHAKASTLLLQNTLVALKGEP.

Basic and acidic residues predominate over residues 1-10 (MEEQHQEAGN). Residues 1-29 (MEEQHQEAGNESKPSSTSVDLQGDSPLQV) are disordered. Positions 11-20 (ESKPSSTSVD) are enriched in polar residues. The PX domain occupies 21–168 (LQGDSPLQVE…SVFLEYSQDL (148 aa)). Residues 255-336 (TQEVNQLKRS…KARTRNREVR (82 aa)) are a coiled coil.

This sequence belongs to the sorting nexin family.

Functionally, may be involved in several stages of intracellular trafficking. The sequence is that of Sorting nexin-32 (Snx32) from Mus musculus (Mouse).